The chain runs to 247 residues: Uridylate kinase (247 aa).

15-18 (KLSG) serves as a coordination point for ATP. The segment at 23 to 28 (GEEGFG) is involved in allosteric activation by GTP. Residue G57 coordinates UMP. The ATP site is built by G58 and R62. UMP contacts are provided by residues D77 and 138 to 145 (TGNPFCTT). ATP-binding residues include T165, Y171, and D174.

Belongs to the UMP kinase family. As to quaternary structure, homohexamer.

The protein localises to the cytoplasm. It carries out the reaction UMP + ATP = UDP + ADP. The protein operates within pyrimidine metabolism; CTP biosynthesis via de novo pathway; UDP from UMP (UMPK route): step 1/1. With respect to regulation, allosterically activated by GTP. Inhibited by UTP. Its function is as follows. Catalyzes the reversible phosphorylation of UMP to UDP. This chain is Uridylate kinase, found in Shewanella loihica (strain ATCC BAA-1088 / PV-4).